Consider the following 564-residue polypeptide: Probable metalloprotease ARX1 (564 aa).

This sequence belongs to the peptidase M24 family. As to quaternary structure, component of the nucleoplasmic and cytoplasmic pre-60S ribosomal particles.

The protein resides in the cytoplasm. It localises to the nucleus. In terms of biological role, probable metalloprotease involved in proper assembly of pre-ribosomal particles during the biogenesis of the 60S ribosomal subunit. Accompanies the pre-60S particles to the cytoplasm. This is Probable metalloprotease ARX1 (ARX1) from Debaryomyces hansenii (strain ATCC 36239 / CBS 767 / BCRC 21394 / JCM 1990 / NBRC 0083 / IGC 2968) (Yeast).